We begin with the raw amino-acid sequence, 274 residues long: Diaminopimelate epimerase (274 aa).

Asparagine 11, glutamine 44, and asparagine 64 together coordinate substrate. Residue cysteine 73 is the Proton donor of the active site. Residues 74–75, asparagine 157, asparagine 190, and 208–209 contribute to the substrate site; these read GN and ER. Catalysis depends on cysteine 217, which acts as the Proton acceptor. 218 to 219 is a binding site for substrate; it reads GS.

This sequence belongs to the diaminopimelate epimerase family. In terms of assembly, homodimer.

It localises to the cytoplasm. The catalysed reaction is (2S,6S)-2,6-diaminopimelate = meso-2,6-diaminopimelate. The protein operates within amino-acid biosynthesis; L-lysine biosynthesis via DAP pathway; DL-2,6-diaminopimelate from LL-2,6-diaminopimelate: step 1/1. In terms of biological role, catalyzes the stereoinversion of LL-2,6-diaminopimelate (L,L-DAP) to meso-diaminopimelate (meso-DAP), a precursor of L-lysine and an essential component of the bacterial peptidoglycan. The chain is Diaminopimelate epimerase from Cronobacter sakazakii (strain ATCC BAA-894) (Enterobacter sakazakii).